The chain runs to 510 residues: Bifunctional purine biosynthesis protein PurH (510 aa).

An MGS-like domain is found at 1-143; sequence MTKRALISVS…KNHSGVLVLV (143 aa).

It belongs to the PurH family.

It carries out the reaction (6R)-10-formyltetrahydrofolate + 5-amino-1-(5-phospho-beta-D-ribosyl)imidazole-4-carboxamide = 5-formamido-1-(5-phospho-D-ribosyl)imidazole-4-carboxamide + (6S)-5,6,7,8-tetrahydrofolate. The catalysed reaction is IMP + H2O = 5-formamido-1-(5-phospho-D-ribosyl)imidazole-4-carboxamide. Its pathway is purine metabolism; IMP biosynthesis via de novo pathway; 5-formamido-1-(5-phospho-D-ribosyl)imidazole-4-carboxamide from 5-amino-1-(5-phospho-D-ribosyl)imidazole-4-carboxamide (10-formyl THF route): step 1/1. The protein operates within purine metabolism; IMP biosynthesis via de novo pathway; IMP from 5-formamido-1-(5-phospho-D-ribosyl)imidazole-4-carboxamide: step 1/1. The polypeptide is Bifunctional purine biosynthesis protein PurH (Deinococcus deserti (strain DSM 17065 / CIP 109153 / LMG 22923 / VCD115)).